The sequence spans 323 residues: Arginase-1 (323 aa).

Positions 1 to 27 (MSSKPKSLEIIGAPFSKGQPRGGVEKG) are disordered. Serine 7 carries the phosphoserine modification. An N6-succinyllysine modification is found at lysine 17. Phosphoserine is present on residues serine 62 and serine 72. Position 75 is an N6-succinyllysine (lysine 75). Residues histidine 101, aspartate 124, histidine 126, and aspartate 128 each contribute to the Mn(2+) site. Substrate-binding positions include 126–130 (HTDIN) and 137–139 (SGN). Serine 163 carries the phosphoserine modification. A substrate-binding site is contributed by aspartate 183. A Phosphoserine modification is found at serine 217. Mn(2+)-binding residues include aspartate 232 and aspartate 234. Substrate is bound by residues threonine 246 and glutamate 277. Phosphothreonine is present on threonine 281.

This sequence belongs to the arginase family. As to quaternary structure, homotrimer. Interacts with CMTM6. Requires Mn(2+) as cofactor. In terms of tissue distribution, expressed in macrophages. Expressed in precursor and mature group 2 innate lymphoid cells (ILC2s). Expressed in lung tumor-associated myeloid cells. Expressed in lung tumor-infiltrating dendritic cells.

The protein resides in the cytoplasm. It localises to the cytoplasmic granule. The enzyme catalyses L-arginine + H2O = urea + L-ornithine. It participates in nitrogen metabolism; urea cycle; L-ornithine and urea from L-arginine: step 1/1. Functionally, key element of the urea cycle converting L-arginine to urea and L-ornithine, which is further metabolized into metabolites proline and polyamides that drive collagen synthesis and bioenergetic pathways critical for cell proliferation, respectively; the urea cycle takes place primarily in the liver and, to a lesser extent, in the kidneys. Functions in L-arginine homeostasis in nonhepatic tissues characterized by the competition between nitric oxide synthase (NOS) and arginase for the available intracellular substrate arginine. Arginine metabolism is a critical regulator of innate and adaptive immune responses. Involved in an antimicrobial effector pathway in polymorphonuclear granulocytes (PMN). Upon PMN cell death is liberated from the phagolysosome and depletes arginine in the microenvironment leading to suppressed T cell and natural killer (NK) cell proliferation and cytokine secretion. In group 2 innate lymphoid cells (ILC2s) promotes acute type 2 inflammation in the lung and is involved in optimal ILC2 proliferation but not survival. Plays a role in the immune response of alternatively activated or M2 macrophages in processes such as wound healing and tissue regeneration, immune defense against multicellular pathogens and parasites, and immune suppression and allergic inflammation; the regulatory outcome seems to be organ specific. In tumor-infiltrating dendritic cells (DCs) and myeloid-derived suppressor cells (MDSCs) plays a role in suppression of T cell-mediated antitumor immunity. This Mus musculus (Mouse) protein is Arginase-1 (Arg1).